The chain runs to 55 residues: Large ribosomal subunit protein bL33 (55 aa).

It belongs to the bacterial ribosomal protein bL33 family.

This is Large ribosomal subunit protein bL33 (rpmG) from Nitrobacter hamburgensis (strain DSM 10229 / NCIMB 13809 / X14).